The primary structure comprises 280 residues: 4-hydroxy-tetrahydrodipicolinate reductase (280 aa).

NAD(+) contacts are provided by residues 14–19, aspartate 40, 106–108, and 130–133; these read GAAGRM, ATT, and APSM. Histidine 166 functions as the Proton donor/acceptor in the catalytic mechanism. A (S)-2,3,4,5-tetrahydrodipicolinate-binding site is contributed by histidine 167. The active-site Proton donor is the lysine 170. (S)-2,3,4,5-tetrahydrodipicolinate is bound at residue 176–177; sequence GT.

It belongs to the DapB family.

Its subcellular location is the cytoplasm. The catalysed reaction is (S)-2,3,4,5-tetrahydrodipicolinate + NAD(+) + H2O = (2S,4S)-4-hydroxy-2,3,4,5-tetrahydrodipicolinate + NADH + H(+). The enzyme catalyses (S)-2,3,4,5-tetrahydrodipicolinate + NADP(+) + H2O = (2S,4S)-4-hydroxy-2,3,4,5-tetrahydrodipicolinate + NADPH + H(+). It functions in the pathway amino-acid biosynthesis; L-lysine biosynthesis via DAP pathway; (S)-tetrahydrodipicolinate from L-aspartate: step 4/4. Its function is as follows. Catalyzes the conversion of 4-hydroxy-tetrahydrodipicolinate (HTPA) to tetrahydrodipicolinate. The sequence is that of 4-hydroxy-tetrahydrodipicolinate reductase from Rhodopirellula baltica (strain DSM 10527 / NCIMB 13988 / SH1).